We begin with the raw amino-acid sequence, 41 residues long: Bacteriocin (41 aa).

A disulfide bridge links C9 with C14.

It localises to the secreted. Its function is as follows. Bacteriocin active against S.aureus, S.typhi, B.thuringiensis, Klebsiella sp., E.coli KL16 and E.coli Gj137. This chain is Bacteriocin, found in Lactococcus sp.